The chain runs to 274 residues: MRIDVVSIFPEYLAPLELSLIGKARQDGILDLNVHDLREFTTDKHRSVDDTPYGGGAGMVMKAEPWAQALSTVAAARAGDAARKPVLIVPSPAGERFTQALAHELAGEEQLVFACGRYEGIDERVIEWAEEHFTVRPMSLGDYVLNGGEVAVLAMTEAIVRLLPGVVGNPESLVEESHSDGLLEYPVYTKPSSWRDREVPPVLLSGNHGKIAQWRRHQQYRRTAQRRPDLLAEFDAGNLPRADRTALGDLGYDVVDGHLRHRPEEPGNGAPADG.

Residues G116 and 140-145 (LGDYVL) contribute to the S-adenosyl-L-methionine site.

Belongs to the RNA methyltransferase TrmD family. In terms of assembly, homodimer.

The protein localises to the cytoplasm. The enzyme catalyses guanosine(37) in tRNA + S-adenosyl-L-methionine = N(1)-methylguanosine(37) in tRNA + S-adenosyl-L-homocysteine + H(+). Its function is as follows. Specifically methylates guanosine-37 in various tRNAs. The polypeptide is tRNA (guanine-N(1)-)-methyltransferase (Arthrobacter sp. (strain FB24)).